Consider the following 468-residue polypeptide: Protein phosphatase ppm-1.A (468 aa).

A disordered region spans residues 1–23 (MTISRADLQIASSAEPKTHGNLN). Residues 106–381 (RYGMSSMQGW…DNMTMVVVCF (276 aa)) form the PPM-type phosphatase domain. Asp145, Gly146, Asp329, and Asp372 together coordinate Mn(2+).

This sequence belongs to the PP2C family. Mg(2+) serves as cofactor. It depends on Mn(2+) as a cofactor. As to expression, expressed in neurons of the nerve ring and motor neurons of the ventral nerve cord.

Its subcellular location is the synapse. It catalyses the reaction O-phospho-L-seryl-[protein] + H2O = L-seryl-[protein] + phosphate. The enzyme catalyses O-phospho-L-threonyl-[protein] + H2O = L-threonyl-[protein] + phosphate. Probable phosphatase which regulates axon termination in ALM and PLM neurons, and synaptic branch extension and/or stabilization in PLM neurons. Plays a role in synapse formation in GABAergic DD motor neurons probably by dephosphorylating pmk-3 thereby negatively regulating a MAP kinase pathway that includes dlk-1, mkk-4 and pmk-3. In Caenorhabditis elegans, this protein is Protein phosphatase ppm-1.A.